The chain runs to 28 residues: Beta-bungarotoxin B chain-like (28 aa).

An N-terminal signal peptide occupies residues 1-24 (MSSGGLLLLLGLLTLCAELTPVSS).

Heterodimer; disulfide-linked. The A chains have phospholipase A2 activity and the B chains show homology with the basic protease inhibitors. As to expression, expressed by the venom gland.

Its subcellular location is the secreted. Functionally, beta-1-bungarotoxin is a presynaptic neurotoxin of the venom. The B chain is homologous to venom basic protease inhibitors but has no protease inhibitor activity and blocks voltage-gated potassium channels (Kv). This is Beta-bungarotoxin B chain-like from Bungarus multicinctus (Many-banded krait).